The following is a 336-amino-acid chain: Plant-specific TFIIB-related protein 2 (336 aa).

The TFIIB-type zinc finger occupies 2–34; it reads EEETCLDCKRPTIMVVDHSSGDTICSECGLVLE. Zn(2+) contacts are provided by C6, C9, C26, and C29.

In terms of tissue distribution, specifically expressed in reproductive organs and seeds.

It localises to the nucleus. Its function is as follows. Plant-specific TFIIB-related protein involved in the regulation of endosperm proliferation during the syncytial phase of endosperm development. Does not contribute to RNA polymerase IV or V activities in reproductive tissues. This chain is Plant-specific TFIIB-related protein 2, found in Arabidopsis thaliana (Mouse-ear cress).